The chain runs to 412 residues: Arginine biosynthesis bifunctional protein ArgJ (412 aa).

Thr155, Lys181, Thr192, Glu279, Asn407, and Ser412 together coordinate substrate. Residue Thr192 is the Nucleophile of the active site.

It belongs to the ArgJ family. In terms of assembly, heterotetramer of two alpha and two beta chains.

It localises to the cytoplasm. It carries out the reaction N(2)-acetyl-L-ornithine + L-glutamate = N-acetyl-L-glutamate + L-ornithine. The catalysed reaction is L-glutamate + acetyl-CoA = N-acetyl-L-glutamate + CoA + H(+). The protein operates within amino-acid biosynthesis; L-arginine biosynthesis; L-ornithine and N-acetyl-L-glutamate from L-glutamate and N(2)-acetyl-L-ornithine (cyclic): step 1/1. Its pathway is amino-acid biosynthesis; L-arginine biosynthesis; N(2)-acetyl-L-ornithine from L-glutamate: step 1/4. Its function is as follows. Catalyzes two activities which are involved in the cyclic version of arginine biosynthesis: the synthesis of N-acetylglutamate from glutamate and acetyl-CoA as the acetyl donor, and of ornithine by transacetylation between N(2)-acetylornithine and glutamate. The polypeptide is Arginine biosynthesis bifunctional protein ArgJ (Aromatoleum aromaticum (strain DSM 19018 / LMG 30748 / EbN1) (Azoarcus sp. (strain EbN1))).